The chain runs to 346 residues: Histidinol-phosphate aminotransferase (346 aa).

Lysine 209 bears the N6-(pyridoxal phosphate)lysine mark.

This sequence belongs to the class-II pyridoxal-phosphate-dependent aminotransferase family. Histidinol-phosphate aminotransferase subfamily. In terms of assembly, homodimer. It depends on pyridoxal 5'-phosphate as a cofactor.

The catalysed reaction is L-histidinol phosphate + 2-oxoglutarate = 3-(imidazol-4-yl)-2-oxopropyl phosphate + L-glutamate. It functions in the pathway amino-acid biosynthesis; L-histidine biosynthesis; L-histidine from 5-phospho-alpha-D-ribose 1-diphosphate: step 7/9. The sequence is that of Histidinol-phosphate aminotransferase from Vibrio parahaemolyticus serotype O3:K6 (strain RIMD 2210633).